The sequence spans 221 residues: Ras-related protein RABA5a (221 aa).

GTP is bound at residue 21–28 (GDSAVGKS). The Effector region signature appears at 43–51 (SKSTIGVEF). Residues 69 to 73 (DTAGQ), 127 to 130 (NKSD), and 157 to 158 (SA) contribute to the GTP site. Residues cysteine 218 and cysteine 219 are each lipidated (S-geranylgeranyl cysteine).

This sequence belongs to the small GTPase superfamily. Rab family.

The protein resides in the cell membrane. Functionally, intracellular vesicle trafficking and protein transport. The protein is Ras-related protein RABA5a (RABA5A) of Arabidopsis thaliana (Mouse-ear cress).